A 399-amino-acid chain; its full sequence is Elongation factor Tu (399 aa).

The tr-type G domain maps to 10–209 (NPHVNIGTIG…EVDSYIPTPE (200 aa)). The interval 19–26 (GHVYHGKT) is G1. GTP is bound at residue 19-26 (GHVYHGKT). Threonine 26 serves as a coordination point for Mg(2+). The tract at residues 60–64 (GITIA) is G2. Residues 81 to 84 (DCPG) are G3. Residues 81–85 (DCPGH) and 136–139 (NKQD) contribute to the GTP site. Positions 136 to 139 (NKQD) are G4. Residues 174–176 (SAL) are G5.

It belongs to the TRAFAC class translation factor GTPase superfamily. Classic translation factor GTPase family. EF-Tu/EF-1A subfamily. Monomer.

It is found in the cytoplasm. It catalyses the reaction GTP + H2O = GDP + phosphate + H(+). Its function is as follows. GTP hydrolase that promotes the GTP-dependent binding of aminoacyl-tRNA to the A-site of ribosomes during protein biosynthesis. This is Elongation factor Tu from Helicobacter pylori (strain J99 / ATCC 700824) (Campylobacter pylori J99).